The sequence spans 439 residues: Taxadien-5-alpha-ol O-acetyltransferase (439 aa).

Catalysis depends on proton acceptor residues His164 and Asp373.

This sequence belongs to the plant acyltransferase family.

It catalyses the reaction taxa-4(20),11-dien-5alpha-ol + acetyl-CoA = taxa-4(20),11-dien-5alpha-yl acetate + CoA. It participates in alkaloid biosynthesis; taxol biosynthesis; 10-deacetyl-2-debenzoylbaccatin III from taxa-4(20),11-dien-5alpha-ol: step 1/3. In Taxus cuspidata (Japanese yew), this protein is Taxadien-5-alpha-ol O-acetyltransferase (TAT).